We begin with the raw amino-acid sequence, 330 residues long: AP-1-like transcription factor YAP3 (330 aa).

Residues 114-150 (SYSNTNYFSKNNGISPSSRSPSVAHNENVPDDSKAKK) form a disordered region. The span at 121–138 (FSKNNGISPSSRSPSVAH) shows a compositional bias: polar residues. Phosphoserine is present on Ser135. The bZIP domain maps to 144–207 (DDSKAKKKAQ…TEINAENRLL (64 aa)). The tract at residues 147–168 (KAKKKAQNRAAQKAFRERKEAR) is basic motif. The interval 172–207 (LQDKLLESERNRQSLLKEIEELRKANTEINAENRLL) is leucine-zipper.

Belongs to the bZIP family. YAP subfamily. In terms of assembly, homodimer. Interacts with the C-terminal, cytoplasmic tail of the multidrug resistance ABC transporter PDR5.

It localises to the cytoplasm. Its subcellular location is the nucleus. Its function is as follows. Transcription activator involved in the regulation of genes expressed in response to environmental changes. When overexpressed it activates transcription of the multidrug resistance ABC transporter PDR5, thus conferring resistance to the fungicide fluconazole (FCZ) and cycloheximide. When overexpressed, it also confers, independent of PDR5, increased resistance to 4-nitroquinoline-N-oxide (4-NQO). Preferentially binds 5'-TTACTAA-3'. The chain is AP-1-like transcription factor YAP3 (YAP3) from Saccharomyces cerevisiae (strain ATCC 204508 / S288c) (Baker's yeast).